The following is a 138-amino-acid chain: Large ribosomal subunit protein uL16 (138 aa).

The segment covering 1-17 (MLIPRKVKHRKQHHPRQ) has biased composition (basic residues). The disordered stretch occupies residues 1–24 (MLIPRKVKHRKQHHPRQRGIASGG).

Belongs to the universal ribosomal protein uL16 family. As to quaternary structure, part of the 50S ribosomal subunit.

Functionally, binds 23S rRNA and is also seen to make contacts with the A and possibly P site tRNAs. This is Large ribosomal subunit protein uL16 from Mycobacterium ulcerans (strain Agy99).